Consider the following 467-residue polypeptide: Uronate isomerase (467 aa).

Belongs to the metallo-dependent hydrolases superfamily. Uronate isomerase family.

It catalyses the reaction D-glucuronate = D-fructuronate. The catalysed reaction is aldehydo-D-galacturonate = keto-D-tagaturonate. It participates in carbohydrate metabolism; pentose and glucuronate interconversion. The protein is Uronate isomerase of Mannheimia succiniciproducens (strain KCTC 0769BP / MBEL55E).